The chain runs to 319 residues: Ferrochelatase (319 aa).

2 residues coordinate Fe cation: His192 and Glu271.

This sequence belongs to the ferrochelatase family.

It is found in the cytoplasm. It carries out the reaction heme b + 2 H(+) = protoporphyrin IX + Fe(2+). Its pathway is porphyrin-containing compound metabolism; protoheme biosynthesis; protoheme from protoporphyrin-IX: step 1/1. Its function is as follows. Catalyzes the ferrous insertion into protoporphyrin IX. This chain is Ferrochelatase, found in Geotalea uraniireducens (strain Rf4) (Geobacter uraniireducens).